A 286-amino-acid polypeptide reads, in one-letter code: ATP synthase gamma chain (286 aa).

Belongs to the ATPase gamma chain family. F-type ATPases have 2 components, CF(1) - the catalytic core - and CF(0) - the membrane proton channel. CF(1) has five subunits: alpha(3), beta(3), gamma(1), delta(1), epsilon(1). CF(0) has three main subunits: a, b and c.

It is found in the cell inner membrane. Its function is as follows. Produces ATP from ADP in the presence of a proton gradient across the membrane. The gamma chain is believed to be important in regulating ATPase activity and the flow of protons through the CF(0) complex. This Pseudomonas aeruginosa (strain UCBPP-PA14) protein is ATP synthase gamma chain.